The chain runs to 408 residues: MAKGTYEGNKTHVNVGTIGHVDHGKTTLTSAITAVSSAMFPATVQKVAYDSVAKASESQGRRDPTKILTIATSHVEYESDNRHYAHVDCPGHADYIKNMITGAAQMDGAILVVSAEDGVMPQTKEHVLLSRQVGVNYIVVFLNKCDKLDDPEMAEIVEAEVIDVLDHYGFDGSKTPIIRGSAIKAIQAIEAGKDPRTDPDCKCILDLLNALDTYIPDPVREVDKDFLMSIEDVYSIPGRGTVVTGRIERGKIEKGNEVEIVGIRPTQKTTCTGVEMFKKEVVGIAGYNVGCLLRGIERKAVERGQVLAKPGTITPHKKFEAEVYILKKEEGGRHSGFVSGYRPQMYFRTTDVTGVINLQGDAQMIMPGDNANLTIELITPIAMEEKQRFAIREGGKTVGNGVVTKILE.

The tr-type G domain occupies 10-219 (KTHVNVGTIG…ALDTYIPDPV (210 aa)). GTP contacts are provided by residues 19–26 (GHVDHGKT), 88–92 (DCPGH), and 143–146 (NKCD). Residue Thr26 coordinates Mg(2+).

The protein belongs to the TRAFAC class translation factor GTPase superfamily. Classic translation factor GTPase family. EF-Tu/EF-1A subfamily. In terms of assembly, monomer.

Its subcellular location is the cytoplasm. It carries out the reaction GTP + H2O = GDP + phosphate + H(+). Functionally, GTP hydrolase that promotes the GTP-dependent binding of aminoacyl-tRNA to the A-site of ribosomes during protein biosynthesis. This Brachyspira hyodysenteriae (strain ATCC 49526 / WA1) protein is Elongation factor Tu.